The following is a 390-amino-acid chain: Olfactomedin-like protein 3A (390 aa).

An N-terminal signal peptide occupies residues 1 to 17; sequence MRALQLLVLVLSGLVGA. A coiled-coil region spans residues 18-91; that stretch reads QQQALMDYLE…RVDRVEREMD (74 aa). The region spanning 130 to 386 is the Olfactomedin-like domain; the sequence is DCSDMISSIK…QILYKLQLKK (257 aa). A disulfide bridge links C131 with C313. The N-linked (GlcNAc...) asparagine glycan is linked to N169.

This sequence belongs to the OLFML3 family.

The protein resides in the secreted. Functionally, secreted scaffold protein that plays an essential role in dorsoventral patterning during early development. Stabilizes axial formation by restricting chordin (CHRD) activity on the dorsal side. Acts by facilitating the association between the tolloid proteases and their substrate chordin (CHRD), leading to enhance chordin (CHRD) degradation. In Danio rerio (Zebrafish), this protein is Olfactomedin-like protein 3A (olfml3a).